Consider the following 379-residue polypeptide: Cytochrome b (379 aa).

Helical transmembrane passes span 34–54, 78–99, 114–134, and 179–199; these read FGSL…LLAM, WFIR…YLHI, WNTG…GYVL, and FFAL…VHLT. Residues His-84 and His-98 each coordinate heme b. Heme b is bound by residues His-183 and His-197. His-202 is an a ubiquinone binding site. 4 helical membrane passes run 227–247, 289–309, 321–341, and 348–368; these read LKDI…AFFS, LGGV…PLLH, LSQL…WIGS, and FIII…VLFP.

Belongs to the cytochrome b family. In terms of assembly, the cytochrome bc1 complex contains 11 subunits: 3 respiratory subunits (MT-CYB, CYC1 and UQCRFS1), 2 core proteins (UQCRC1 and UQCRC2) and 6 low-molecular weight proteins (UQCRH/QCR6, UQCRB/QCR7, UQCRQ/QCR8, UQCR10/QCR9, UQCR11/QCR10 and a cleavage product of UQCRFS1). This cytochrome bc1 complex then forms a dimer. Heme b is required as a cofactor.

Its subcellular location is the mitochondrion inner membrane. Its function is as follows. Component of the ubiquinol-cytochrome c reductase complex (complex III or cytochrome b-c1 complex) that is part of the mitochondrial respiratory chain. The b-c1 complex mediates electron transfer from ubiquinol to cytochrome c. Contributes to the generation of a proton gradient across the mitochondrial membrane that is then used for ATP synthesis. The sequence is that of Cytochrome b (MT-CYB) from Struthio camelus (Common ostrich).